The primary structure comprises 789 residues: Ribosomal protein S6 kinase alpha-5 (789 aa).

The Protein kinase 1 domain occupies Phe-39–Phe-308. Residues Leu-45–Val-53 and Lys-71 each bind ATP. Asp-167 acts as the Proton acceptor in catalysis. Ser-202 is subject to Phosphoserine; by autocatalysis. One can recognise an AGC-kinase C-terminal domain in the interval Gln-309–Asn-377. Residue Ser-350 is modified to Phosphoserine. 2 positions are modified to phosphoserine; by autocatalysis: Ser-366 and Ser-371. The Protein kinase 2 domain occupies Asp-416 to Leu-677. ATP contacts are provided by residues Leu-422–Cys-430 and Lys-445. Asp-534 acts as the Proton acceptor in catalysis. Phosphothreonine occurs at positions 571 and 690. The segment at Ala-731–Asp-789 is disordered. Low complexity predominate over residues Thr-739–Thr-769. 3 positions are modified to phosphoserine; by autocatalysis: Ser-740, Ser-742, and Ser-748. Residues Leu-770–Asp-789 show a composition bias toward polar residues.

It belongs to the protein kinase superfamily. AGC Ser/Thr protein kinase family. S6 kinase subfamily. Requires Mg(2+) as cofactor. Post-translationally, ser-366 and Thr-571 phosphorylation is required for kinase activity. Ser-366 and Ser-202 are autophosphorylated by the C-terminal kinase domain, and their phosphorylation is essential for the catalytic activity of the N-terminal kinase domain. Phosphorylated at Ser-350, Thr-571 and Thr-690 by MAP kinases. Autophosphorylated at Ser-740, Ser-742 and Ser-748 by the N-terminal kinase domain. As to expression, widely expressed with high levels in heart, brain and placenta. Less abundant in lung, kidney and liver.

The protein resides in the nucleus. The enzyme catalyses L-seryl-[protein] + ATP = O-phospho-L-seryl-[protein] + ADP + H(+). It carries out the reaction L-threonyl-[protein] + ATP = O-phospho-L-threonyl-[protein] + ADP + H(+). Its activity is regulated as follows. Activated by phosphorylation at Ser-350, Thr-571 and Thr-690 by MAP kinases, and by further autophosphorylation of Ser-202, Ser-366 and Ser-371 by the activated C-terminal kinase domain. The active N-terminal kinase domain finally phosphorylates downstream substrates, as well as Ser-740, Ser-742 and Ser-748 in its own C-terminal region. Its function is as follows. Serine/threonine-protein kinase that is required for the mitogen or stress-induced phosphorylation of the transcription factors CREB1 and ATF1 and that contributes to gene activation by histone phosphorylation. Phosphorylates CREB1 and ATF1 in response to mitogenic or stress stimuli such as UV-C irradiation, epidermal growth factor (EGF) and anisomycin. Directly represses transcription via phosphorylation of 'Ser-1' of histone H2A. Phosphorylates 'Ser-10' of histone H3 in response to mitogenics, stress stimuli and EGF, which results in the transcriptional activation of several immediate early genes, including proto-oncogenes c-fos/FOS and c-jun/JUN. May also phosphorylate 'Ser-28' of histone H3. Mediates the mitogen- and stress-induced phosphorylation of high mobility group protein 1 (HMGN1/HMG14). In Gallus gallus (Chicken), this protein is Ribosomal protein S6 kinase alpha-5 (RPS6KA5).